The primary structure comprises 305 residues: Spermatogenesis-associated protein 4 (305 aa).

One can recognise a Calponin-homology (CH) domain in the interval S49–R155.

In terms of tissue distribution, highly expressed in testis, the expression is observed precisely in seminiferous tubules.

Its subcellular location is the nucleus. Its function is as follows. May play a role in apoptosis regulation. The polypeptide is Spermatogenesis-associated protein 4 (SPATA4) (Homo sapiens (Human)).